Reading from the N-terminus, the 354-residue chain is MAELKNDRYLRALLKQPVDVTPVWMMRQAGRYLPEYKATRAQAGDFMSLCRNAELACEVTLQPLRRYDLDAAILFSDILTVPDAMGLGLYFETGEGPRFERPTDTLDAIKKLAVPDPEDELGYVMKAVSTIRRELKGEVPLIGFSGSPWTLATYMVEGGSSKTFEKIKKMAYAEPAALHMLLDKLADAVTLYLNAQVANGAQSLMIFDSWGGALSHTAYREFSLRYMQKIVDGLTRHADGRQVPVTLFTKGGGLWLEAMAETGCDALGLDWTVDIADARRRVGHKVALQGNMDPSMLYASPERIHEEVRQILAGYGEGSGHVFNLGHGIHQHVDPEHAGAFIKSVHELSAQYHK.

Residues 27–31 (RQAGR), Asp-77, Tyr-154, Ser-209, and His-327 contribute to the substrate site.

Belongs to the uroporphyrinogen decarboxylase family. In terms of assembly, homodimer.

Its subcellular location is the cytoplasm. It catalyses the reaction uroporphyrinogen III + 4 H(+) = coproporphyrinogen III + 4 CO2. The protein operates within porphyrin-containing compound metabolism; protoporphyrin-IX biosynthesis; coproporphyrinogen-III from 5-aminolevulinate: step 4/4. In terms of biological role, catalyzes the decarboxylation of four acetate groups of uroporphyrinogen-III to yield coproporphyrinogen-III. In Shewanella loihica (strain ATCC BAA-1088 / PV-4), this protein is Uroporphyrinogen decarboxylase.